The primary structure comprises 543 residues: Carboxypeptidase Y homolog A (543 aa).

A signal peptide spans 1–17 (MRVLPATLLVGAATAAV). Positions 18–124 (PPFQQILGLP…KLEAYDLRVK (107 aa)) are excised as a propeptide. Disulfide bonds link Cys-179–Cys-419, Cys-313–Cys-327, Cys-337–Cys-360, Cys-344–Cys-353, and Cys-382–Cys-389. Asn-210 is a glycosylation site (N-linked (GlcNAc...) asparagine). The active site involves Ser-266. Asp-458 is an active-site residue. Asn-509 carries N-linked (GlcNAc...) asparagine glycosylation. His-520 is an active-site residue.

This sequence belongs to the peptidase S10 family.

It localises to the vacuole. It carries out the reaction Release of a C-terminal amino acid with broad specificity.. Its function is as follows. Vacuolar carboxypeptidase involved in degradation of small peptides. Digests preferentially peptides containing an aliphatic or hydrophobic residue in P1' position, as well as methionine, leucine or phenylalanine in P1 position of ester substrate. This is Carboxypeptidase Y homolog A (cpyA) from Aspergillus clavatus (strain ATCC 1007 / CBS 513.65 / DSM 816 / NCTC 3887 / NRRL 1 / QM 1276 / 107).